Here is a 632-residue protein sequence, read N- to C-terminus: Probable potassium transport system protein Kup 1 (632 aa).

The next 12 helical transmembrane spans lie at 19 to 39 (LVLG…LYAL), 59 to 79 (VISM…VVFV), 110 to 130 (VLMM…VITP), 146 to 166 (PQLS…LFLI), 178 to 198 (FGPI…LHLV), 213 to 233 (ITFL…VFLV), 256 to 276 (WFVL…AMLL), 298 to 318 (MVLL…SGAF), 346 to 366 (IYLP…VISF), 373 to 393 (AAAY…LAAV), 403 to 423 (PALV…FFAA), and 428 to 448 (VAEG…LLMT).

It belongs to the HAK/KUP transporter (TC 2.A.72) family.

It localises to the cell inner membrane. It catalyses the reaction K(+)(in) + H(+)(in) = K(+)(out) + H(+)(out). In terms of biological role, transport of potassium into the cell. Likely operates as a K(+):H(+) symporter. This is Probable potassium transport system protein Kup 1 from Cupriavidus necator (strain ATCC 17699 / DSM 428 / KCTC 22496 / NCIMB 10442 / H16 / Stanier 337) (Ralstonia eutropha).